A 338-amino-acid chain; its full sequence is Holliday junction branch migration complex subunit RuvB (338 aa).

A large ATPase domain (RuvB-L) region spans residues 1–181; sequence MERAITPEKR…FGVISRLEFY (181 aa). Residues Leu20, Arg21, Gly62, Lys65, Thr66, Thr67, 128–130, Arg171, Tyr181, and Arg218 contribute to the ATP site; that span reads EDF. Thr66 lines the Mg(2+) pocket. Residues 182–252 are small ATPAse domain (RuvB-S); it reads THDELAFIVT…VVQETLRLLE (71 aa). The tract at residues 255-338 is head domain (RuvB-H); it reads EMGFDQMDRM…TPERPQGSLF (84 aa). Residues Arg310 and Arg315 each contribute to the DNA site.

This sequence belongs to the RuvB family. As to quaternary structure, homohexamer. Forms an RuvA(8)-RuvB(12)-Holliday junction (HJ) complex. HJ DNA is sandwiched between 2 RuvA tetramers; dsDNA enters through RuvA and exits via RuvB. An RuvB hexamer assembles on each DNA strand where it exits the tetramer. Each RuvB hexamer is contacted by two RuvA subunits (via domain III) on 2 adjacent RuvB subunits; this complex drives branch migration. In the full resolvosome a probable DNA-RuvA(4)-RuvB(12)-RuvC(2) complex forms which resolves the HJ.

The protein localises to the cytoplasm. The enzyme catalyses ATP + H2O = ADP + phosphate + H(+). Functionally, the RuvA-RuvB-RuvC complex processes Holliday junction (HJ) DNA during genetic recombination and DNA repair, while the RuvA-RuvB complex plays an important role in the rescue of blocked DNA replication forks via replication fork reversal (RFR). RuvA specifically binds to HJ cruciform DNA, conferring on it an open structure. The RuvB hexamer acts as an ATP-dependent pump, pulling dsDNA into and through the RuvAB complex. RuvB forms 2 homohexamers on either side of HJ DNA bound by 1 or 2 RuvA tetramers; 4 subunits per hexamer contact DNA at a time. Coordinated motions by a converter formed by DNA-disengaged RuvB subunits stimulates ATP hydrolysis and nucleotide exchange. Immobilization of the converter enables RuvB to convert the ATP-contained energy into a lever motion, pulling 2 nucleotides of DNA out of the RuvA tetramer per ATP hydrolyzed, thus driving DNA branch migration. The RuvB motors rotate together with the DNA substrate, which together with the progressing nucleotide cycle form the mechanistic basis for DNA recombination by continuous HJ branch migration. Branch migration allows RuvC to scan DNA until it finds its consensus sequence, where it cleaves and resolves cruciform DNA. The sequence is that of Holliday junction branch migration complex subunit RuvB from Trichlorobacter lovleyi (strain ATCC BAA-1151 / DSM 17278 / SZ) (Geobacter lovleyi).